We begin with the raw amino-acid sequence, 374 residues long: Chaperone protein DnaJ (374 aa).

One can recognise a J domain in the interval 4–68 (DYYDILGVSR…QMRGRYDQFG (65 aa)). The CR-type zinc finger occupies 133–215 (GGEQQIRISH…CGGRGQNQVS (83 aa)). Cys146, Cys149, Cys163, Cys166, Cys189, Cys192, Cys203, and Cys206 together coordinate Zn(2+). CXXCXGXG motif repeat units follow at residues 146-153 (CKTCEGTG), 163-170 (CSTCQGSG), 189-196 (CPTCNGQG), and 203-210 (CDSCGGRG).

The protein belongs to the DnaJ family. Homodimer. Requires Zn(2+) as cofactor.

It is found in the cytoplasm. In terms of biological role, participates actively in the response to hyperosmotic and heat shock by preventing the aggregation of stress-denatured proteins and by disaggregating proteins, also in an autonomous, DnaK-independent fashion. Unfolded proteins bind initially to DnaJ; upon interaction with the DnaJ-bound protein, DnaK hydrolyzes its bound ATP, resulting in the formation of a stable complex. GrpE releases ADP from DnaK; ATP binding to DnaK triggers the release of the substrate protein, thus completing the reaction cycle. Several rounds of ATP-dependent interactions between DnaJ, DnaK and GrpE are required for fully efficient folding. Also involved, together with DnaK and GrpE, in the DNA replication of plasmids through activation of initiation proteins. This Acaryochloris marina (strain MBIC 11017) protein is Chaperone protein DnaJ.